A 409-amino-acid chain; its full sequence is Cuticle-degrading serine protease (409 aa).

A signal peptide spans 1–21; it reads MLTNGLISLLAIAGLATNAFA. Residues 22-123 constitute a propeptide that is removed on maturation; sequence GPIRKVSNAG…VEQDTVVTTY (102 aa). Residues 39–122 form the Inhibitor I9 domain; it reads KYIVVLKKGL…YVEQDTVVTT (84 aa). The 280-residue stretch at 130–409 folds into the Peptidase S8 domain; that stretch reads TWGLDRISHE…PNKIAYNGYA (280 aa). Catalysis depends on D164, which acts as the Charge relay system. N178 carries N-linked (GlcNAc...) asparagine glycosylation. H200 acts as the Charge relay system in catalysis. A glycan (N-linked (GlcNAc...) asparagine) is linked at N252. Residue S353 is the Charge relay system of the active site.

This sequence belongs to the peptidase S8 family.

The protein localises to the secreted. Its activity is regulated as follows. Inhibited by PMSF, SSI, the peptide Phe-Val and by Phe, but not by EDTA. Functionally, hydrolyzes gelatin, casein, the chromogenic substrate azocoll and the cuticle of the nematode P.redivivus. Immobilizes P.redivivus. The polypeptide is Cuticle-degrading serine protease (Arthrobotrys oligospora (strain ATCC 24927 / CBS 115.81 / DSM 1491) (Nematode-trapping fungus)).